The chain runs to 114 residues: Large ribosomal subunit protein bL19 (114 aa).

Belongs to the bacterial ribosomal protein bL19 family.

In terms of biological role, this protein is located at the 30S-50S ribosomal subunit interface and may play a role in the structure and function of the aminoacyl-tRNA binding site. This Thermoanaerobacter sp. (strain X514) protein is Large ribosomal subunit protein bL19.